We begin with the raw amino-acid sequence, 466 residues long: Asparagine--tRNA ligase (466 aa).

Belongs to the class-II aminoacyl-tRNA synthetase family. Homodimer.

The protein resides in the cytoplasm. The catalysed reaction is tRNA(Asn) + L-asparagine + ATP = L-asparaginyl-tRNA(Asn) + AMP + diphosphate + H(+). The sequence is that of Asparagine--tRNA ligase from Shewanella baltica (strain OS185).